A 128-amino-acid polypeptide reads, in one-letter code: uncharacterized protein (128 aa).

This sequence to M.jannaschii MJ0766.

This is an uncharacterized protein from Methanocaldococcus jannaschii (strain ATCC 43067 / DSM 2661 / JAL-1 / JCM 10045 / NBRC 100440) (Methanococcus jannaschii).